The following is a 315-amino-acid chain: Three-prime repair exonuclease 1 (315 aa).

Aspartate 18 and glutamate 20 together coordinate Mg(2+). 20-21 provides a ligand contact to substrate; the sequence is EA. Position 78 is a phosphoserine (serine 78). Substrate is bound at residue tyrosine 129. Residue serine 167 is modified to Phosphoserine. Histidine 195 functions as the Proton donor/acceptor in the catalytic mechanism. Aspartate 200 contacts Mg(2+). Aspartate 200 serves as a coordination point for substrate. Positions 236 to 315 are necessary for endoplasmic reticulum localization; that stretch reads TTSTGTNPRP…YGLSLAMPGQ (80 aa). Residues 243 to 315 form an interaction with UBQLN1 region; the sequence is PRPSAVTATV…YGLSLAMPGQ (73 aa). Residues 256–282 are disordered; the sequence is RASDTGPNLRGDRSPKPAPSPKMCPGA. Positions 271–282 are enriched in pro residues; that stretch reads KPAPSPKMCPGA. Residues 282–315 are necessary for cytoplasmic retention; the sequence is APPGEGLLAPLGLLAFLTLAVAMLYGLSLAMPGQ.

Belongs to the exonuclease superfamily. TREX family. As to quaternary structure, homodimer. Interacts (via proline-rich region) with TCERG1/CA150 (via the second WW domain). Component of the SET complex, composed of at least ANP32A, APEX1, HMGB2, NME1, SET and TREX1. Within this complex, directly interacts with SET; this interaction does not result in TREX1 inhibition. Also interacts with NME1, but only following translocation to the nucleus. Directly interacts with UBQLN1 (via ubiquitin-like domain); the interaction may control TREX1 subcellular location. Mg(2+) is required as a cofactor. Post-translationally, ubiquitinated, but not targeted to proteasomal degradation. Ubiquitination may be important for interaction with UBQLN1.

The protein localises to the nucleus. The protein resides in the cytoplasm. Its subcellular location is the cytosol. It localises to the endoplasmic reticulum membrane. It carries out the reaction Exonucleolytic cleavage in the 3'- to 5'-direction to yield nucleoside 5'-phosphates.. Functionally, major cellular 3'-to-5' DNA exonuclease which digests single-stranded DNA (ssDNA) and double-stranded DNA (dsDNA) with mismatched 3' termini. Prevents cell-intrinsic initiation of autoimmunity. Acts by metabolizing DNA fragments from endogenous retroelements, including L1, LTR and SINE elements. Plays a key role in degradation of DNA fragments at cytosolic micronuclei arising from genome instability: its association with the endoplasmic reticulum membrane directs TREX1 to ruptured micronuclei, leading to micronuclear DNA degradation. Micronuclear DNA degradation is required to limit CGAS activation and subsequent inflammation. Unless degraded, these DNA fragments accumulate in the cytosol and activate the cGAS-STING innate immune signaling, leading to the production of type I interferon. Prevents chronic ATM-dependent checkpoint activation, by processing ssDNA polynucleotide species arising from the processing of aberrant DNA replication intermediates. Inefficiently degrades oxidized DNA, such as that generated upon antimicrobial reactive oxygen production or upon absorption of UV light. During GZMA-mediated cell death, contributes to DNA damage in concert with NME1. NME1 nicks one strand of DNA and TREX1 removes bases from the free 3' end to enhance DNA damage and prevent DNA end reannealing and rapid repair. The polypeptide is Three-prime repair exonuclease 1 (Bos taurus (Bovine)).